Reading from the N-terminus, the 395-residue chain is Small ribosomal subunit protein mS31 (395 aa).

The transit peptide at 1 to 65 (MFPRVSTFLP…IQRYFGTNSV (65 aa)) directs the protein to the mitochondrion. 2 disordered regions span residues 70–97 (KDKQSVRTEETSKETSESQDSEKENTKK) and 175–196 (SELLSQLQQHEEESRAQRDAKR). The span at 183–196 (QHEEESRAQRDAKR) shows a compositional bias: basic and acidic residues.

The protein belongs to the mitochondrion-specific ribosomal protein mS31 family. As to quaternary structure, component of the mitochondrial small ribosomal subunit (mt-SSU). Mature mammalian 55S mitochondrial ribosomes consist of a small (28S) and a large (39S) subunit. The 28S small subunit contains a 12S ribosomal RNA (12S mt-rRNA) and 30 different proteins. The 39S large subunit contains a 16S rRNA (16S mt-rRNA), a copy of mitochondrial valine transfer RNA (mt-tRNA(Val)), which plays an integral structural role, and 52 different proteins.

The protein localises to the mitochondrion. This is Small ribosomal subunit protein mS31 (MRPS31) from Homo sapiens (Human).